Reading from the N-terminus, the 235-residue chain is Purine nucleoside phosphorylase DeoD-type (235 aa).

Histidine 4 is a binding site for a purine D-ribonucleoside. Phosphate contacts are provided by residues glycine 20, arginine 24, arginine 43, and 87-90; that span reads RVGT. A purine D-ribonucleoside-binding positions include glutamate 162, 179–181, and 203–204; these read EME and SD. Aspartate 204 (proton donor) is an active-site residue.

This sequence belongs to the PNP/UDP phosphorylase family. In terms of assembly, homohexamer; trimer of homodimers.

It carries out the reaction a purine D-ribonucleoside + phosphate = a purine nucleobase + alpha-D-ribose 1-phosphate. It catalyses the reaction a purine 2'-deoxy-D-ribonucleoside + phosphate = a purine nucleobase + 2-deoxy-alpha-D-ribose 1-phosphate. Functionally, catalyzes the reversible phosphorolytic breakdown of the N-glycosidic bond in the beta-(deoxy)ribonucleoside molecules, with the formation of the corresponding free purine bases and pentose-1-phosphate. The protein is Purine nucleoside phosphorylase DeoD-type of Bacillus cereus (strain ZK / E33L).